A 359-amino-acid polypeptide reads, in one-letter code: Tropomodulin-1 (359 aa).

The tract at residues 36-61 is disordered; sequence ELDPDNALLPAGLRQKDQTTKAPTGP. The tract at residues 39–138 is tropomyosin-binding; sequence PDNALLPAGL…CDIAAILGMH (100 aa).

This sequence belongs to the tropomodulin family. As to quaternary structure, binds to the N-terminus of tropomyosin and to actin. Interacts with FLII. As to expression, highly expressed in the erythrocyte, heart and skeletal muscle.

The protein resides in the cytoplasm. It is found in the cytoskeleton. In terms of biological role, blocks the elongation and depolymerization of the actin filaments at the pointed end. The Tmod/TM complex contributes to the formation of the short actin protofilament, which in turn defines the geometry of the membrane skeleton. May play an important role in regulating the organization of actin filaments by preferentially binding to a specific tropomyosin isoform at its N-terminus. The polypeptide is Tropomodulin-1 (TMOD1) (Homo sapiens (Human)).